The sequence spans 241 residues: Small ribosomal subunit protein uS3 (241 aa).

The region spanning isoleucine 39–glutamine 109 is the KH type-2 domain. Residues glutamate 214 to glutamate 241 are disordered. Residues glutamine 232 to glutamate 241 are compositionally biased toward basic and acidic residues.

The protein belongs to the universal ribosomal protein uS3 family. In terms of assembly, part of the 30S ribosomal subunit. Forms a tight complex with proteins S10 and S14.

Functionally, binds the lower part of the 30S subunit head. Binds mRNA in the 70S ribosome, positioning it for translation. This chain is Small ribosomal subunit protein uS3, found in Rippkaea orientalis (strain PCC 8801 / RF-1) (Cyanothece sp. (strain PCC 8801)).